We begin with the raw amino-acid sequence, 471 residues long: Eremophilane O-acetyltransferase prx11 (471 aa).

It belongs to the fumigaclavine B O-acetyltransferase family. In terms of assembly, monomer.

It participates in sesquiterpene biosynthesis. Its function is as follows. O-acetyltransferase; part of the gene cluster that mediates the biosynthesis of PR-toxin, a bicyclic sesquiterpene belonging to the eremophilane class and acting as a mycotoxin. The first step of the pathway is catalyzed by the aristolochene synthase which performs the cyclization of trans,trans-farnesyl diphosphate (FPP) to the bicyclic sesquiterpene aristolochene. Following the formation of aristolochene, the non-oxygenated aristolochene is converted to the trioxygenated intermediate eremofortin B, via 7-epi-neopetasone. This conversion appears to involve three enzymes, a hydroxysterol oxidase-like enzyme, the quinone-oxidase prx3 that forms the quinone-type-structure in the bicyclic nucleus of aristolochene with the C8-oxo group and the C-3 hydroxyl group, and the P450 monooxygenase prx9 that introduces the epoxide at the double bond between carbons 1 and 2. No monoxy or dioxy-intermediates have been reported to be released to the broth, so these three early oxidative reactions may be coupled together. Eremofortin B is further oxidized by another P450 monooxygenase, that introduces a second epoxide between carbons 7 and 11 prior to acetylation to eremofortin A by the acetyltransferase prx11. The second epoxidation may be performed by a second P450 monooxygenase. After the acetylation step, eremofortin A is converted to eremofortin C and then to PR-toxin. First the conversion of eremofortin A to eremofortin C proceeds by oxidation of the side chain of the molecule at C-12 and is catalyzed by the short-chain oxidoreductase prx1. The cytochrome P450 monooxygenase prx8 also plays a role in this step. The primary alcohol formed at C-12 is finally oxidized by the short-chain alcohol dehydrogenase prx4 that forms PR-toxin. The polypeptide is Eremophilane O-acetyltransferase prx11 (Penicillium rubens (strain ATCC 28089 / DSM 1075 / NRRL 1951 / Wisconsin 54-1255) (Penicillium chrysogenum)).